A 74-amino-acid polypeptide reads, in one-letter code: UPF0291 protein lmo0496 (74 aa).

This sequence belongs to the UPF0291 family.

Its subcellular location is the cytoplasm. The chain is UPF0291 protein lmo0496 from Listeria monocytogenes serovar 1/2a (strain ATCC BAA-679 / EGD-e).